Reading from the N-terminus, the 336-residue chain is Glycerol-3-phosphate dehydrogenase [NAD(P)+] (336 aa).

NADPH-binding residues include serine 11, tryptophan 12, arginine 33, arginine 34, and lysine 107. Lysine 107 and glycine 137 together coordinate sn-glycerol 3-phosphate. Residue alanine 141 coordinates NADPH. Sn-glycerol 3-phosphate is bound by residues lysine 192, aspartate 245, serine 255, arginine 256, and asparagine 257. Residue lysine 192 is the Proton acceptor of the active site. Arginine 256 serves as a coordination point for NADPH. Residue glutamate 282 coordinates NADPH.

This sequence belongs to the NAD-dependent glycerol-3-phosphate dehydrogenase family.

It localises to the cytoplasm. It carries out the reaction sn-glycerol 3-phosphate + NAD(+) = dihydroxyacetone phosphate + NADH + H(+). It catalyses the reaction sn-glycerol 3-phosphate + NADP(+) = dihydroxyacetone phosphate + NADPH + H(+). It participates in membrane lipid metabolism; glycerophospholipid metabolism. Catalyzes the reduction of the glycolytic intermediate dihydroxyacetone phosphate (DHAP) to sn-glycerol 3-phosphate (G3P), the key precursor for phospholipid synthesis. This chain is Glycerol-3-phosphate dehydrogenase [NAD(P)+], found in Thermobifida fusca (strain YX).